A 240-amino-acid chain; its full sequence is Ribosomal RNA large subunit methyltransferase E (240 aa).

Residues 1–20 (MSKAGGNKGGSRTGGRGGAG) show a composition bias toward gly residues. The interval 1-40 (MSKAGGNKGGSRTGGRGGAGSSNLHVRVKKKAGTTKESSR) is disordered. Residues Gly92, Trp94, Asp115, Asp131, and Asp155 each coordinate S-adenosyl-L-methionine. Lys195 functions as the Proton acceptor in the catalytic mechanism.

This sequence belongs to the class I-like SAM-binding methyltransferase superfamily. RNA methyltransferase RlmE family.

It is found in the cytoplasm. It catalyses the reaction uridine(2552) in 23S rRNA + S-adenosyl-L-methionine = 2'-O-methyluridine(2552) in 23S rRNA + S-adenosyl-L-homocysteine + H(+). Its function is as follows. Specifically methylates the uridine in position 2552 of 23S rRNA at the 2'-O position of the ribose in the fully assembled 50S ribosomal subunit. The protein is Ribosomal RNA large subunit methyltransferase E of Brucella ovis (strain ATCC 25840 / 63/290 / NCTC 10512).